A 232-amino-acid polypeptide reads, in one-letter code: Large ribosomal subunit protein uL1 (232 aa).

Belongs to the universal ribosomal protein uL1 family. Part of the 50S ribosomal subunit.

In terms of biological role, binds directly to 23S rRNA. The L1 stalk is quite mobile in the ribosome, and is involved in E site tRNA release. Functionally, protein L1 is also a translational repressor protein, it controls the translation of the L11 operon by binding to its mRNA. This Azorhizobium caulinodans (strain ATCC 43989 / DSM 5975 / JCM 20966 / LMG 6465 / NBRC 14845 / NCIMB 13405 / ORS 571) protein is Large ribosomal subunit protein uL1.